A 135-amino-acid polypeptide reads, in one-letter code: Dihydromethanopterin reductase (135 aa).

Residues A9, 16-21 (LGLNGH), 52-54 (PKT), and 93-97 (GGIAV) each bind NADP(+).

Homodimer.

The enzyme catalyses 5,6,7,8-tetrahydromethanopterin + NAD(+) = 7,8-dihydromethanopterin + NADH + H(+). It carries out the reaction 5,6,7,8-tetrahydromethanopterin + NADP(+) = 7,8-dihydromethanopterin + NADPH + H(+). It functions in the pathway cofactor biosynthesis; 5,6,7,8-tetrahydromethanopterin biosynthesis. Functionally, catalyzes the reduction of dihydromethanopterin (H(2)MPT) to tetrahydromethanopterin (H(4)MPT). Shows preference for NADPH rather than NADH as electron donor. Does not reduce dihydrofolate. The polypeptide is Dihydromethanopterin reductase (dmrA) (Methylorubrum extorquens (strain ATCC 14718 / DSM 1338 / JCM 2805 / NCIMB 9133 / AM1) (Methylobacterium extorquens)).